The chain runs to 108 residues: Large ribosomal subunit protein bL31B (108 aa).

A disordered region spans residues 81–108; the sequence is KPAQPVQAPAEEGPVVKGKKKAPAKKKK. The span at 97–108 shows a compositional bias: basic residues; sequence KGKKKAPAKKKK.

It belongs to the bacterial ribosomal protein bL31 family. Type B subfamily. As to quaternary structure, part of the 50S ribosomal subunit.

This is Large ribosomal subunit protein bL31B from Chlamydia caviae (strain ATCC VR-813 / DSM 19441 / 03DC25 / GPIC) (Chlamydophila caviae).